The sequence spans 333 residues: DNA-directed RNA polymerase subunit alpha (333 aa).

An alpha N-terminal domain (alpha-NTD) region spans residues 1–233; the sequence is MVQEKLRFST…DLFIPFLHAE (233 aa). An alpha C-terminal domain (alpha-CTD) region spans residues 266 to 333; that stretch reads KKEIALKSIF…DILKIQKYFT (68 aa).

The protein belongs to the RNA polymerase alpha chain family. In plastids the minimal PEP RNA polymerase catalytic core is composed of four subunits: alpha, beta, beta', and beta''. When a (nuclear-encoded) sigma factor is associated with the core the holoenzyme is formed, which can initiate transcription.

It localises to the plastid. It is found in the chloroplast. It carries out the reaction RNA(n) + a ribonucleoside 5'-triphosphate = RNA(n+1) + diphosphate. DNA-dependent RNA polymerase catalyzes the transcription of DNA into RNA using the four ribonucleoside triphosphates as substrates. The chain is DNA-directed RNA polymerase subunit alpha from Phaseolus angularis (Azuki bean).